Reading from the N-terminus, the 933-residue chain is Protein translocase subunit SecA (933 aa).

ATP contacts are provided by residues Gln-87, Gly-105 to Thr-109, and Asp-515. 4 residues coordinate Zn(2+): Cys-917, Cys-919, Cys-928, and His-929.

This sequence belongs to the SecA family. In terms of assembly, monomer and homodimer. Part of the essential Sec protein translocation apparatus which comprises SecA, SecYEG and auxiliary proteins SecDF-YajC and YidC. Zn(2+) serves as cofactor.

Its subcellular location is the cell inner membrane. It is found in the cytoplasm. The enzyme catalyses ATP + H2O + cellular proteinSide 1 = ADP + phosphate + cellular proteinSide 2.. Its function is as follows. Part of the Sec protein translocase complex. Interacts with the SecYEG preprotein conducting channel. Has a central role in coupling the hydrolysis of ATP to the transfer of proteins into and across the cell membrane, serving both as a receptor for the preprotein-SecB complex and as an ATP-driven molecular motor driving the stepwise translocation of polypeptide chains across the membrane. The sequence is that of Protein translocase subunit SecA from Burkholderia cenocepacia (strain ATCC BAA-245 / DSM 16553 / LMG 16656 / NCTC 13227 / J2315 / CF5610) (Burkholderia cepacia (strain J2315)).